Here is a 288-residue protein sequence, read N- to C-terminus: Small ribosomal subunit biogenesis GTPase RsgA (288 aa).

The region spanning T61–L218 is the CP-type G domain. GTP-binding positions include N110–D113 and G161–T169. C242, C247, H249, and C255 together coordinate Zn(2+).

The protein belongs to the TRAFAC class YlqF/YawG GTPase family. RsgA subfamily. Monomer. Associates with 30S ribosomal subunit, binds 16S rRNA. Requires Zn(2+) as cofactor.

It is found in the cytoplasm. Its function is as follows. One of several proteins that assist in the late maturation steps of the functional core of the 30S ribosomal subunit. Helps release RbfA from mature subunits. May play a role in the assembly of ribosomal proteins into the subunit. Circularly permuted GTPase that catalyzes slow GTP hydrolysis, GTPase activity is stimulated by the 30S ribosomal subunit. In Clostridium acetobutylicum (strain ATCC 824 / DSM 792 / JCM 1419 / IAM 19013 / LMG 5710 / NBRC 13948 / NRRL B-527 / VKM B-1787 / 2291 / W), this protein is Small ribosomal subunit biogenesis GTPase RsgA.